Here is a 250-residue protein sequence, read N- to C-terminus: Alpha/beta hydrolase nvfD (250 aa).

Residues aspartate 198 and histidine 226 each act as charge relay system in the active site.

This sequence belongs to the AB hydrolase superfamily.

It functions in the pathway secondary metabolite biosynthesis; terpenoid biosynthesis. In terms of biological role, alpha/beta hydrolase; part of the gene cluster that mediates the biosynthesis of novofumigatonin, a heavily oxygenated meroterpenoid containing a unique orthoester moiety. The first step of the pathway is the synthesis of 3,5-dimethylorsellinic acid (DMOA) by the polyketide synthase nvfA via condensation of one acetyl-CoA starter unit with 3 malonyl-CoA units and 2 methylations. DMOA is then converted to farnesyl-DMOA by the farnesyltransferase nvfB. Epoxydation by FAD-dependent monooxygenase nvfK, followed by a protonation-initiated cyclization catalyzed by the terpene cyclase nvfL leads to the production of asnavolin H. The short chain dehydrogenase nvfC then as a 3-OH dehydrogenase of asnovolin H to yield chemesin D. There are two branches to synthesize asnovolin A from chemesin D. In one branch, chemesin D undergoes Baeyer-Villiger oxidation by nvfH, methylation by nvfJ, and enoyl reduction by the nvfM D enoylreductase that reduces the double bond between C-5'and C-6', to form respectively asnovolin I, asnovolin K, and asnovolin A. In the other branch, the methylation precedes the Baeyer-Villiger oxidation and the enoyl reduction to yield asnovolin A via the asnovolin J intermediate. Asnovolin A is further converted to fumigatonoid A by the Fe(II)/2-oxoglutarate-dependent dioxygenase nvfI that catalyzes an endoperoxidation reaction. The alpha/beta hydrolase nvfD then acts as an epimerase that converts fumigatonoid A to its C-5' epimer, which then undergoes spontaneous or nvfD-catalyzed lactonization. The following step utilizes the ketoreductase nvfG to produce fumigatonoid B. The dioxygenase nvfE further converts fumigatonoid B into fumigatonoid C. Finally the Fe(II)/2-oxoglutarate-dependent dioxygenase nvfF catalyzes two rounds of oxidation to transform fumigatonoid C into the end product, novofumigatonin A. The sequence is that of Alpha/beta hydrolase nvfD from Aspergillus novofumigatus (strain IBT 16806).